Consider the following 325-residue polypeptide: Inner membrane protein YrbG (325 aa).

The Periplasmic portion of the chain corresponds to 1-5; sequence MLLAT. A helical membrane pass occupies residues 6–26; the sequence is ALLIVGLLLVVYSADRLVFAA. Residues 27-37 lie on the Cytoplasmic side of the membrane; that stretch reads SILCRTFGIPP. A helical transmembrane segment spans residues 38 to 58; sequence LIIGMTVVSIGTSLPEVIVSL. Residues 59 to 67 are Periplasmic-facing; that stretch reads AASLHEQRD. Residues 68–88 form a helical membrane-spanning segment; sequence LAVGTALGSNIINILLILGLA. Residues 89–104 are Cytoplasmic-facing; it reads ALVRPFTVHSDVLRRE. A helical transmembrane segment spans residues 105–125; sequence LPLMLLVSVVAGSVLYDGQLS. Residue arginine 126 is a topological domain, periplasmic. A helical membrane pass occupies residues 127–147; sequence SDGIFLLFLAVLWLLFIVKLA. Over 148–169 the chain is Cytoplasmic; that stretch reads RQAERQGTDSLTREQLAELPRD. A helical membrane pass occupies residues 170–190; the sequence is GGLPVAFLWLGIALIIMPVAT. Over 191–198 the chain is Periplasmic; that stretch reads RMVVDNAT. Residues 199 to 219 traverse the membrane as a helical segment; that stretch reads VLANYFAISELTMGLTAIAIG. The Cytoplasmic segment spans residues 220-243; sequence TSLPELATAIAGVRKGENDIAVGN. A helical transmembrane segment spans residues 244–264; sequence IIGANIFNIVIVLGLPALITP. Residues 265–269 lie on the Periplasmic side of the membrane; sequence GEIDP. The chain crosses the membrane as a helical span at residues 270 to 290; the sequence is LAYSRDYSVMLLVSIIFALLC. Topologically, residues 291–302 are cytoplasmic; that stretch reads WRRSPQPGRGVG. The chain crosses the membrane as a helical span at residues 303-323; that stretch reads VLLTGGFIVWLAMLYWLSPIL. Residues 324–325 are Periplasmic-facing; sequence VE.

Belongs to the Ca(2+):cation antiporter (CaCA) (TC 2.A.19) family.

Its subcellular location is the cell inner membrane. This chain is Inner membrane protein YrbG (yrbG), found in Escherichia coli (strain K12).